A 195-amino-acid polypeptide reads, in one-letter code: MGGGDGHNDQDKGLFSNLAGGLAGGGHYPPGQYPPAAGGYPPQGYPPAGGGYPPQGYPPAGGGYPPQGYPPAGGGYPPQGYPPAGHHSGSSAPHHSGHGGVAGMVAGGRAAAAAAYGVHHMTQGHGSHGGHGGYAHGAMGMMPGMGAMAMASSSTVSTVMESLSRESTGRARSTDTRSGSNLSFSISSRTFWATK.

Disordered stretches follow at residues 23-103 (AGGG…GVAG) and 159-182 (VMES…GSNL). The segment covering 47 to 77 (PAGGGYPPQGYPPAGGGYPPQGYPPAGGGYP) has biased composition (gly residues). The segment covering 82–94 (PPAGHHSGSSAPH) has biased composition (low complexity). Over residues 163–175 (LSRESTGRARSTD) the composition is skewed to basic and acidic residues.

This Daucus carota (Wild carrot) protein is Glycine-rich protein A3.